Here is a 156-residue protein sequence, read N- to C-terminus: Transcription elongation factor GreA (156 aa).

The stretch at 2–78 forms a coiled coil; sequence AKEIILTQEG…MISKAKLIED (77 aa).

The protein belongs to the GreA/GreB family.

Functionally, necessary for efficient RNA polymerase transcription elongation past template-encoded arresting sites. The arresting sites in DNA have the property of trapping a certain fraction of elongating RNA polymerases that pass through, resulting in locked ternary complexes. Cleavage of the nascent transcript by cleavage factors such as GreA or GreB allows the resumption of elongation from the new 3'terminus. GreA releases sequences of 2 to 3 nucleotides. The polypeptide is Transcription elongation factor GreA (Mesoplasma florum (strain ATCC 33453 / NBRC 100688 / NCTC 11704 / L1) (Acholeplasma florum)).